A 196-amino-acid polypeptide reads, in one-letter code: Segregation and condensation protein B (196 aa).

Belongs to the ScpB family. As to quaternary structure, homodimer. Homodimerization may be required to stabilize the binding of ScpA to the Smc head domains. Component of a cohesin-like complex composed of ScpA, ScpB and the Smc homodimer, in which ScpA and ScpB bind to the head domain of Smc. The presence of the three proteins is required for the association of the complex with DNA.

Its subcellular location is the cytoplasm. Functionally, participates in chromosomal partition during cell division. May act via the formation of a condensin-like complex containing Smc and ScpA that pull DNA away from mid-cell into both cell halves. This is Segregation and condensation protein B from Pediococcus pentosaceus (strain ATCC 25745 / CCUG 21536 / LMG 10740 / 183-1w).